The primary structure comprises 126 residues: Large ribosomal subunit protein bL20c (126 aa).

The protein belongs to the bacterial ribosomal protein bL20 family.

The protein resides in the plastid. The protein localises to the chloroplast. In terms of biological role, binds directly to 23S ribosomal RNA and is necessary for the in vitro assembly process of the 50S ribosomal subunit. It is not involved in the protein synthesizing functions of that subunit. This Illicium oligandrum (Star anise) protein is Large ribosomal subunit protein bL20c.